The sequence spans 430 residues: Tektin-2 (430 aa).

Coiled-coil stretches lie at residues Cys81–Leu162 and Phe265–Cys379.

This sequence belongs to the tektin family. As to quaternary structure, microtubule inner protein component of sperm flagellar doublet microtubules. May interact with CCDC172. Post-translationally, tyrosine phosphorylated. Ubiquitinated, leading to its degradation. Deubiquitinated by USP16, promoting its stability. As to expression, expressed in trachea multiciliated cells.

The protein localises to the cytoplasm. Its subcellular location is the cytoskeleton. It is found in the cilium axoneme. It localises to the flagellum axoneme. The protein resides in the microtubule organizing center. Its function is as follows. Microtubule inner protein (MIP) part of the dynein-decorated doublet microtubules (DMTs) in cilia and flagellar axoneme. Plays a key role in the assembly or attachment of the inner dynein arm to microtubules in sperm flagella and tracheal cilia. Forms filamentous polymers in the walls of ciliary and flagellar microtubules. The sequence is that of Tektin-2 (TEKT2) from Bos taurus (Bovine).